A 30-amino-acid chain; its full sequence is Cycloviolacin-O10 (30 aa).

The segment at residues 1 to 30 (GIPCGESCVYIPCLTSAVGCSCKSKVCYRN) is a cross-link (cyclopeptide (Gly-Asn)). Intrachain disulfides connect cysteine 4–cysteine 20, cysteine 8–cysteine 22, and cysteine 13–cysteine 27.

Post-translationally, this is a cyclic peptide. Expressed in petals and roots but not in leaves, petioles and runners (at protein level).

Functionally, probably participates in a plant defense mechanism. This Viola odorata (Sweet violet) protein is Cycloviolacin-O10.